The chain runs to 422 residues: uncharacterized protein (422 aa).

Positions 1–23 (MLSLIPFTVCAFLALITSKGGSA) are cleaved as a signal peptide.

As to expression, component of the acid-insoluble organic matrix of the aragonitic skeleton (at protein level).

It is found in the secreted. This is an uncharacterized protein from Acropora millepora (Staghorn coral).